Here is a 323-residue protein sequence, read N- to C-terminus: Large ribosomal subunit protein uL10 (323 aa).

A disordered region spans residues 298-323 (AAAAPAAAAEPEEEDDDDDFGMGALF). Over residues 307–317 (EPEEEDDDDDF) the composition is skewed to acidic residues.

This sequence belongs to the universal ribosomal protein uL10 family. As to quaternary structure, P0 forms a pentameric complex by interaction with dimers of P1 and P2. Phosphorylated.

Ribosomal protein P0 is the functional equivalent of E.coli protein L10. In Trypanosoma cruzi, this protein is Large ribosomal subunit protein uL10.